Here is a 428-residue protein sequence, read N- to C-terminus: MKTSLFKSLYFQVLTAIAIGILLGHYYPELGAQMKPLGDAFVKLIKMIIAPVIFCTVVTGIAGMESMKAVGRTGAVALLYFEIVSTIALIIGLIIVNVVQPGAGMNVDPATLDAQAVAVYAAQAKEQGIIAFLMDVIPGSVIGAFASGNILQVLLFAVLFGFALHRLGSKGQLIFNVIESFSQVIFGIINMIMRLAPIGAFGAMAFTIGKYGVGSLVQLGQLIICFYITCILFVVVVLGTIARVTGFSIFKFIRYIREELLIVLGTSSSESALPRMLDKMEKLGCRKSVVGLVIPTGYSFNLDGTSIYLTMAAVFIAQATNSHMDIFHQITLLVVLLLSSKGAAGVTGSGFIVLAATISAVGHLPVAGLALILGIDRFMSEARALTNLVGNGVATVVVAKWVKELDHQKLDDVLNNRAPDGKTHEISF.

The next 9 membrane-spanning stretches (helical) occupy residues 4–24 (SLFKSLYFQVLTAIAIGILLG), 44–64 (LIKMIIAPVIFCTVVTGIAGM), 76–96 (VALLYFEIVSTIALIIGLIIV), 142–162 (IGAFASGNILQVLLFAVLFGF), 184–204 (VIFGIINMIMRLAPIGAFGAM), 222–242 (LIICFYITCILFVVVVLGTIA), 289–309 (VVGLVIPTGYSFNLDGTSIYL), 326–346 (IFHQITLLVVLLLSSKGAAGV), and 352–372 (IVLAATISAVGHLPVAGLALI).

The protein belongs to the dicarboxylate/amino acid:cation symporter (DAACS) (TC 2.A.23) family.

It localises to the cell inner membrane. Functionally, responsible for the transport of dicarboxylates such as succinate, fumarate, and malate from the periplasm across the membrane. The polypeptide is C4-dicarboxylate transport protein (Salmonella gallinarum (strain 287/91 / NCTC 13346)).